The following is a 346-amino-acid chain: Dihydroorotase (346 aa).

Positions 14 and 16 each coordinate Zn(2+). Residues 16–18 and N42 each bind substrate; that span reads HLR. K100, H137, and H175 together coordinate Zn(2+). K100 is subject to N6-carboxylysine. H137 contributes to the substrate binding site. L220 contributes to the substrate binding site. Position 248 (D248) interacts with Zn(2+). D248 is a catalytic residue. Residues H252 and A264 each contribute to the substrate site.

It belongs to the metallo-dependent hydrolases superfamily. DHOase family. Class II DHOase subfamily. In terms of assembly, homodimer. Zn(2+) is required as a cofactor.

It catalyses the reaction (S)-dihydroorotate + H2O = N-carbamoyl-L-aspartate + H(+). It participates in pyrimidine metabolism; UMP biosynthesis via de novo pathway; (S)-dihydroorotate from bicarbonate: step 3/3. Its function is as follows. Catalyzes the reversible cyclization of carbamoyl aspartate to dihydroorotate. The chain is Dihydroorotase from Ruegeria pomeroyi (strain ATCC 700808 / DSM 15171 / DSS-3) (Silicibacter pomeroyi).